The sequence spans 599 residues: NADH-quinone oxidoreductase subunit C/D (599 aa).

Residues 1–189 form an NADH dehydrogenase I subunit C region; that stretch reads MTDLTTHDLA…DPFVLTKQKE (189 aa). The segment at 213 to 599 is NADH dehydrogenase I subunit D; the sequence is DFMFLNLGPN…IDFVMSDVDR (387 aa).

This sequence in the N-terminal section; belongs to the complex I 30 kDa subunit family. In the C-terminal section; belongs to the complex I 49 kDa subunit family. NDH-1 is composed of 13 different subunits. Subunits NuoB, CD, E, F, and G constitute the peripheral sector of the complex.

It localises to the cell inner membrane. It carries out the reaction a quinone + NADH + 5 H(+)(in) = a quinol + NAD(+) + 4 H(+)(out). In terms of biological role, NDH-1 shuttles electrons from NADH, via FMN and iron-sulfur (Fe-S) centers, to quinones in the respiratory chain. The immediate electron acceptor for the enzyme in this species is believed to be ubiquinone. Couples the redox reaction to proton translocation (for every two electrons transferred, four hydrogen ions are translocated across the cytoplasmic membrane), and thus conserves the redox energy in a proton gradient. The protein is NADH-quinone oxidoreductase subunit C/D of Pectobacterium carotovorum subsp. carotovorum (strain PC1).